Consider the following 634-residue polypeptide: Tyrosine-protein kinase transforming protein erbB (634 aa).

The Protein kinase domain occupies 132–399; the sequence is FKKVKVLGSG…KMARDPPRYL (268 aa). ATP-binding positions include 138 to 146 and Lys-165; that span reads LGSGAFGTV. Asp-257 functions as the Proton acceptor in the catalytic mechanism.

This sequence belongs to the protein kinase superfamily. Tyr protein kinase family. EGF receptor subfamily.

The enzyme catalyses L-tyrosyl-[protein] + ATP = O-phospho-L-tyrosyl-[protein] + ADP + H(+). The protein is Tyrosine-protein kinase transforming protein erbB (V-ERBB) of Avian leukosis virus (ALV).